A 385-amino-acid chain; its full sequence is MEKLSEALDLLQEELLSLYEQNSQSLADQSRHWSLLRKEQVLLYYARGKGIMRIGMQPVPPQSVSQAKAKQAIEQSLYIDSLLHSKYANEPWTLCDTSRERLVAEPAYTFKKGGKQIDVRYGDSEENIVRYVLWLDIYYQDEFDTWEKAHGKLDHKGLSYMHGTQQVYYVDFEEEANKYSETGKYEILNQPTTIPTTSAAGTSGPELPGHSASGSGACSLTPRKGPSRRPGRRSSRFPRRSGGRGRLGRGGSGELPPQPQPSSSWSPPSPQQVGSKHQLRTTSSAGGRLGRLLQEAYDPPVLVLAGDPNSLKCIRYRLSHKHRGLYLGASTTWKWTSGGDGASKHDRGSARMLLAFLSDQQREDFMDRVTFPKSVRVFRGGLDEL.

Positions 1–199 (MEKLSEALDL…QPTTIPTTSA (199 aa)) are transactivation domain. Positions 189-201 (NQPTTIPTTSAAG) are enriched in polar residues. The tract at residues 189-282 (NQPTTIPTTS…VGSKHQLRTT (94 aa)) is disordered. The span at 225–247 (GPSRRPGRRSSRFPRRSGGRGRL) shows a compositional bias: basic residues. The span at 261–275 (PSSSWSPPSPQQVGS) shows a compositional bias: low complexity. Positions 298 to 385 (DPPVLVLAGD…RVFRGGLDEL (88 aa)) are DNA-binding domain.

Belongs to the papillomaviridae E2 protein family. Binds DNA as homodimer. Interacts with protein E1; this interaction greatly increases E1 DNA-binding activity. Interacts with protein L1; this interaction enhances E2-dependent replication and transcription activation. Interacts with protein L2; this interaction inhibits E2 transcriptional activity but not DNA replication function E2. Interacts with protein E7; this interaction inhibits E7 oncogenic activity. Interacts with host TAF1; this interaction modulates E2-dependent transcriptional regulation. Interacts with host BRD4; this interaction mediates E2 transcriptional activation function. Additionally, the interaction with host BRD4 on mitotic chromosomes mediates tethering of the viral genome. Interacts with host TOPBP1; this interaction is required for optimal viral DNA replication. Post-translationally, phosphorylated.

It is found in the host nucleus. Functionally, plays a role in the initiation of viral DNA replication. A dimer of E2 interacts with a dimer of E1 in order to improve specificity of E1 DNA binding activity. Once the complex recognizes and binds DNA at specific sites, the E2 dimer is removed from DNA. E2 also regulates viral transcription through binding to the E2RE response element (5'-ACCNNNNNNGGT-3') present in multiple copies in the regulatory regions of the viral genome. Activates or represses transcription depending on E2RE's position with regards to proximal promoter elements including the TATA-box. Repression occurs by sterically hindering the assembly of the transcription initiation complex. The protein is Regulatory protein E2 of Canis lupus familiaris (Dog).